The chain runs to 272 residues: Phytolongin Phyl2.2 (272 aa).

Positions 12–116 (CIAKGTVVLA…LINPVSHCLQ (105 aa)) constitute a Longin domain. A helical; Anchor for type IV membrane protein membrane pass occupies residues 243–263 (WVVLMFDFCICAVLFGIWLWI).

Belongs to the synaptobrevin family.

Its subcellular location is the membrane. Non-SNARE longin protein involved in membrane-trafficking machinery. The chain is Phytolongin Phyl2.2 from Arabidopsis thaliana (Mouse-ear cress).